The chain runs to 209 residues: Octanoyltransferase (209 aa).

One can recognise a BPL/LPL catalytic domain in the interval Glu29–Ser209. Substrate is bound by residues Arg71–His78, Ser138–Gly140, and Gly151–Ala153. Catalysis depends on Cys169, which acts as the Acyl-thioester intermediate.

It belongs to the LipB family.

Its subcellular location is the cytoplasm. It carries out the reaction octanoyl-[ACP] + L-lysyl-[protein] = N(6)-octanoyl-L-lysyl-[protein] + holo-[ACP] + H(+). The protein operates within protein modification; protein lipoylation via endogenous pathway; protein N(6)-(lipoyl)lysine from octanoyl-[acyl-carrier-protein]: step 1/2. In terms of biological role, catalyzes the transfer of endogenously produced octanoic acid from octanoyl-acyl-carrier-protein onto the lipoyl domains of lipoate-dependent enzymes. Lipoyl-ACP can also act as a substrate although octanoyl-ACP is likely to be the physiological substrate. The sequence is that of Octanoyltransferase from Hydrogenovibrio crunogenus (strain DSM 25203 / XCL-2) (Thiomicrospira crunogena).